We begin with the raw amino-acid sequence, 535 residues long: Beta-amylase (535 aa).

Positions 1-2 are cleaved as a propeptide — removed in mature form; it reads ME. Position 3 is an N-acetylvaline (Val3). Positions 51, 91, and 99 each coordinate substrate. Glu184 (proton donor) is an active-site residue. Positions 293, 298, and 340 each coordinate substrate. Glu378 functions as the Proton acceptor in the catalytic mechanism. Substrate-binding positions include 379–380 and Arg418; that span reads NA. A run of 3 repeats spans residues 489–499, 500–510, and 511–521. A 4 X 11 AA tandem repeats region spans residues 489–532; sequence GPTGGMGGQAEGPTCGMGGQVKGPTGGMGGQAEDPTSGMGGELP. Positions 490–535 are cleaved as a propeptide — removed in mature form; the sequence is PTGGMGGQAEGPTCGMGGQVKGPTGGMGGQAEDPTSGMGGELPATM. The segment at 513–535 is disordered; it reads TGGMGGQAEDPTSGMGGELPATM. The 4; approximate repeat unit spans residues 522 to 532; that stretch reads DPTSGMGGELP.

The protein belongs to the glycosyl hydrolase 14 family. As to quaternary structure, monomer. In terms of tissue distribution, endosperm.

It catalyses the reaction Hydrolysis of (1-&gt;4)-alpha-D-glucosidic linkages in polysaccharides so as to remove successive maltose units from the non-reducing ends of the chains.. In terms of biological role, catalyzes the liberation of maltose from 1,4-alpha-D glucans. The chain is Beta-amylase from Hordeum vulgare subsp. spontaneum (Wild barley).